The following is a 74-amino-acid chain: Defensin Lc-def (74 aa).

Residues 1 to 27 form the signal peptide; sequence MEKKTVAALSFLFIVLFVAQEIAVTEA. 4 disulfide bridges follow: Cys30/Cys74, Cys41/Cys62, Cys47/Cys68, and Cys51/Cys70.

Its subcellular location is the secreted. Its function is as follows. Has antifungal activity against the phytopathogenic fungus A.niger VKM F-2259, but not against A.alternata VKM F-3047. Does not inhibit trypsin or chymotrypsin. This is Defensin Lc-def from Lens culinaris subsp. culinaris (Cultivated lentil).